A 236-amino-acid chain; its full sequence is Urease accessory protein UreG 2 (236 aa).

Positions methionine 1–glycine 40 are disordered. Residue glycine 43–threonine 50 coordinates GTP.

The protein belongs to the SIMIBI class G3E GTPase family. UreG subfamily. In terms of assembly, homodimer. UreD, UreF and UreG form a complex that acts as a GTP-hydrolysis-dependent molecular chaperone, activating the urease apoprotein by helping to assemble the nickel containing metallocenter of UreC. The UreE protein probably delivers the nickel.

The protein localises to the cytoplasm. Facilitates the functional incorporation of the urease nickel metallocenter. This process requires GTP hydrolysis, probably effectuated by UreG. The sequence is that of Urease accessory protein UreG 2 from Saccharopolyspora erythraea (strain ATCC 11635 / DSM 40517 / JCM 4748 / NBRC 13426 / NCIMB 8594 / NRRL 2338).